We begin with the raw amino-acid sequence, 353 residues long: Protein-glutamate methylesterase/protein-glutamine glutaminase 4 (353 aa).

The Response regulatory domain maps to 7–124 (RILVAEDSPT…SPDFDADSRR (118 aa)). D58 is modified (4-aspartylphosphate). The CheB-type methylesterase domain maps to 158–350 (PVSPTRPGVV…SRLTSAFRGS (193 aa)). Catalysis depends on residues S172, H199, and D292.

It belongs to the CheB family. Post-translationally, phosphorylated by CheA. Phosphorylation of the N-terminal regulatory domain activates the methylesterase activity.

It localises to the cytoplasm. It catalyses the reaction [protein]-L-glutamate 5-O-methyl ester + H2O = L-glutamyl-[protein] + methanol + H(+). The catalysed reaction is L-glutaminyl-[protein] + H2O = L-glutamyl-[protein] + NH4(+). Involved in chemotaxis. Part of a chemotaxis signal transduction system that modulates chemotaxis in response to various stimuli. Catalyzes the demethylation of specific methylglutamate residues introduced into the chemoreceptors (methyl-accepting chemotaxis proteins or MCP) by CheR. Also mediates the irreversible deamidation of specific glutamine residues to glutamic acid. The polypeptide is Protein-glutamate methylesterase/protein-glutamine glutaminase 4 (Myxococcus xanthus (strain DK1622)).